Reading from the N-terminus, the 287-residue chain is tRNA selenocysteine 1-associated protein 1 (287 aa).

2 RRM domains span residues 3–86 (ASLW…YATY) and 96–175 (YSLF…VAIP).

This sequence belongs to the RRM TRSPAP family. As to quaternary structure, component of the tRNA(Sec) complex composed at least of EEFSEC, SECISBP2, SEPHS1, SEPSECS, TRNAU1AP and tRNA(Sec). Found in a complex with tRNA(Sec). Interacts with SEPSECS. Associates with mRNP and/or polysomes. Found in a complex with EEFSEC, SECISBP2, TRNAU1AP and tRNA(Sec).

It is found in the nucleus. Its subcellular location is the cytoplasm. In terms of biological role, involved in the early steps of selenocysteine biosynthesis and tRNA(Sec) charging to the later steps resulting in the cotranslational incorporation of selenocysteine into selenoproteins. Stabilizes the SECISBP2, EEFSEC and tRNA(Sec) complex. May be involved in the methylation of tRNA(Sec). Enhances efficiency of selenoproteins synthesis. The polypeptide is tRNA selenocysteine 1-associated protein 1 (TRNAU1AP) (Bos taurus (Bovine)).